We begin with the raw amino-acid sequence, 673 residues long: UvrABC system protein B (673 aa).

The Helicase ATP-binding domain maps to 26 to 183 (EGLEDGLAHQ…RRLAELQYTR (158 aa)). 39–46 (GVTGSGKT) serves as a coordination point for ATP. Positions 92-115 (YYDYYQPEAYVPSSDTFIEKDASV) match the Beta-hairpin motif. Residues 431-597 (QVDDLLSEIR…GLNKKVVDIL (167 aa)) enclose the Helicase C-terminal domain. The UVR domain maps to 633–668 (QQKIHELEGQMMQHAQNLEFEEAAQIRDQLHQLREL).

Belongs to the UvrB family. As to quaternary structure, forms a heterotetramer with UvrA during the search for lesions. Interacts with UvrC in an incision complex.

It localises to the cytoplasm. The UvrABC repair system catalyzes the recognition and processing of DNA lesions. A damage recognition complex composed of 2 UvrA and 2 UvrB subunits scans DNA for abnormalities. Upon binding of the UvrA(2)B(2) complex to a putative damaged site, the DNA wraps around one UvrB monomer. DNA wrap is dependent on ATP binding by UvrB and probably causes local melting of the DNA helix, facilitating insertion of UvrB beta-hairpin between the DNA strands. Then UvrB probes one DNA strand for the presence of a lesion. If a lesion is found the UvrA subunits dissociate and the UvrB-DNA preincision complex is formed. This complex is subsequently bound by UvrC and the second UvrB is released. If no lesion is found, the DNA wraps around the other UvrB subunit that will check the other stand for damage. The polypeptide is UvrABC system protein B (Klebsiella pneumoniae (strain 342)).